The sequence spans 340 residues: Chitinase 2 (340 aa).

Residues 1–32 form the signal peptide; the sequence is MSTPRAAASLAKKAALVALAVLAAALATAARA. Positions 33–73 constitute a Chitin-binding type-1 domain; it reads EQCGAQAGGARCPNCLCCSRWGWCGTTSDFCGDGCQSQCSG. Intrachain disulfides connect Cys35–Cys50, Cys44–Cys56, Cys47–Cys74, Cys49–Cys63, Cys67–Cys71, Cys110–Cys172, Cys184–Cys192, and Cys291–Cys323. The active-site Proton donor is the Glu154.

It belongs to the glycosyl hydrolase 19 family. Chitinase class I subfamily. As to expression, expressed in roots, sheaths and meristems.

It carries out the reaction Random endo-hydrolysis of N-acetyl-beta-D-glucosaminide (1-&gt;4)-beta-linkages in chitin and chitodextrins.. In terms of biological role, hydrolyzes chitin and plays a role in defense against fungal pathogens containing chitin. Its overexpression confers enhanced resistance to sheath blight pathogen (R.solani). The sequence is that of Chitinase 2 (Cht2) from Oryza sativa subsp. japonica (Rice).